Here is a 405-residue protein sequence, read N- to C-terminus: Splicing factor 45 (405 aa).

Position 2 is an N-acetylserine (serine 2). Serine 2 is modified (phosphoserine). A Glycyl lysine isopeptide (Lys-Gly) (interchain with G-Cter in SUMO2) cross-link involves residue lysine 15. Lysine 21 is subject to N6-acetyllysine. Glycyl lysine isopeptide (Lys-Gly) (interchain with G-Cter in SUMO2) cross-links involve residues lysine 24 and lysine 33. Lysine 41 carries the post-translational modification N6-acetyllysine; alternate. Lysine 41 is covalently cross-linked (Glycyl lysine isopeptide (Lys-Gly) (interchain with G-Cter in SUMO2); alternate). Residues 57–68 (LKRGGSSDDRQI) are compositionally biased toward basic and acidic residues. Disordered regions lie at residues 57 to 88 (LKRGGSSDDRQIADTPPHVAAGLKDPVPSGFS) and 114 to 233 (RQRE…FLAN). Residue lysine 58 forms a Glycyl lysine isopeptide (Lys-Gly) (interchain with G-Cter in SUMO2) linkage. The residue at position 71 (threonine 71) is a Phosphothreonine. Residues 114–153 (RQREERQRQRELERQKEIEEREKRRKDRHEASGFSRRPDP) show a composition bias toward basic and acidic residues. Serine 155 and serine 169 each carry phosphoserine. A compositionally biased stretch (basic and acidic residues) spans 182 to 200 (VEKDKELPRDFPYEEDSRP). Phosphoserine is present on serine 222. The G-patch domain maps to 235–283 (GGTVAHKIMQKYGFREGQGLGKHEQGLSTALSVEKTSKRGGKIIVGDAT). Threonine 237 is subject to Phosphothreonine. Residue lysine 256 forms a Glycyl lysine isopeptide (Lys-Gly) (interchain with G-Cter in SUMO2) linkage. Serine 266 carries the post-translational modification Phosphoserine. Lysine 276 participates in a covalent cross-link: Glycyl lysine isopeptide (Lys-Gly) (interchain with G-Cter in SUMO2). Phosphoserine is present on residues serine 295 and serine 297. Residues 310–389 (VVLLRNMVGA…YFGGRVVKAC (80 aa)) form the RRM domain.

As to quaternary structure, binds SXL. Associates with the spliceosome. Interacts with SF3B1, SF1 and U2AF2.

It is found in the nucleus. Its function is as follows. Splice factor that binds to the single-stranded 3'AG at the exon/intron border and promotes its utilization in the second catalytic step. Involved in the regulation of alternative splicing and the utilization of cryptic splice sites. In Mus musculus (Mouse), this protein is Splicing factor 45 (Rbm17).